Here is a 62-residue protein sequence, read N- to C-terminus: UPF0434 protein azo1471 (62 aa).

Belongs to the UPF0434 family.

This chain is UPF0434 protein azo1471, found in Azoarcus sp. (strain BH72).